The sequence spans 714 residues: Hormonally up-regulated neu tumor-associated kinase (714 aa).

The span at methionine 1–proline 16 shows a compositional bias: low complexity. Residues methionine 1–proline 28 form a disordered region. The region spanning leucine 62–leucine 320 is the Protein kinase domain. ATP-binding positions include leucine 68–valine 76 and lysine 91. The Proton acceptor role is filled by aspartate 186. Basic and acidic residues predominate over residues histidine 624 to glycine 635. Disordered regions lie at residues histidine 624–lysine 658 and lysine 674–cysteine 714. Polar residues predominate over residues serine 692–serine 703.

This sequence belongs to the protein kinase superfamily. CAMK Ser/Thr protein kinase family. SNF1 subfamily.

It catalyses the reaction L-seryl-[protein] + ATP = O-phospho-L-seryl-[protein] + ADP + H(+). It carries out the reaction L-threonyl-[protein] + ATP = O-phospho-L-threonyl-[protein] + ADP + H(+). In Mus musculus (Mouse), this protein is Hormonally up-regulated neu tumor-associated kinase (Hunk).